We begin with the raw amino-acid sequence, 182 residues long: NADH-quinone oxidoreductase subunit I (182 aa).

2 4Fe-4S ferredoxin-type domains span residues 52–82 (LTRD…LQKA) and 92–121 (DFFR…LTPD). C62, C65, C68, C72, C101, C104, C107, and C111 together coordinate [4Fe-4S] cluster.

It belongs to the complex I 23 kDa subunit family. As to quaternary structure, NDH-1 is composed of 13 different subunits. Subunits NuoA, H, J, K, L, M, N constitute the membrane sector of the complex. [4Fe-4S] cluster is required as a cofactor.

The protein resides in the cell inner membrane. The catalysed reaction is a quinone + NADH + 5 H(+)(in) = a quinol + NAD(+) + 4 H(+)(out). NDH-1 shuttles electrons from NADH, via FMN and iron-sulfur (Fe-S) centers, to quinones in the respiratory chain. The immediate electron acceptor for the enzyme in this species is believed to be ubiquinone. Couples the redox reaction to proton translocation (for every two electrons transferred, four hydrogen ions are translocated across the cytoplasmic membrane), and thus conserves the redox energy in a proton gradient. This chain is NADH-quinone oxidoreductase subunit I, found in Pseudomonas savastanoi pv. phaseolicola (strain 1448A / Race 6) (Pseudomonas syringae pv. phaseolicola (strain 1448A / Race 6)).